Reading from the N-terminus, the 548-residue chain is Chaperonin GroEL (548 aa).

ATP-binding positions include 30-33 (TLGP), Lys-51, 87-91 (DGTTT), Gly-415, 479-481 (NAA), and Asp-495.

Belongs to the chaperonin (HSP60) family. In terms of assembly, forms a cylinder of 14 subunits composed of two heptameric rings stacked back-to-back. Interacts with the co-chaperonin GroES.

It localises to the cytoplasm. It carries out the reaction ATP + H2O + a folded polypeptide = ADP + phosphate + an unfolded polypeptide.. Functionally, together with its co-chaperonin GroES, plays an essential role in assisting protein folding. The GroEL-GroES system forms a nano-cage that allows encapsulation of the non-native substrate proteins and provides a physical environment optimized to promote and accelerate protein folding. The protein is Chaperonin GroEL of Vibrio campbellii (strain ATCC BAA-1116).